Consider the following 142-residue polypeptide: Large ribosomal subunit protein uL11 (142 aa).

This sequence belongs to the universal ribosomal protein uL11 family. In terms of assembly, part of the ribosomal stalk of the 50S ribosomal subunit. Interacts with L10 and the large rRNA to form the base of the stalk. L10 forms an elongated spine to which L12 dimers bind in a sequential fashion forming a multimeric L10(L12)X complex. Post-translationally, one or more lysine residues are methylated.

In terms of biological role, forms part of the ribosomal stalk which helps the ribosome interact with GTP-bound translation factors. In Nitrobacter winogradskyi (strain ATCC 25391 / DSM 10237 / CIP 104748 / NCIMB 11846 / Nb-255), this protein is Large ribosomal subunit protein uL11.